A 391-amino-acid polypeptide reads, in one-letter code: Phosphoglycerate kinase (391 aa).

Substrate-binding positions include 16–18, arginine 31, 54–57, arginine 108, and arginine 141; these read DLN and HLGR. Residues lysine 192, glutamate 314, and 340 to 343 each bind ATP; that span reads GGDT.

It belongs to the phosphoglycerate kinase family. Monomer.

It localises to the cytoplasm. The enzyme catalyses (2R)-3-phosphoglycerate + ATP = (2R)-3-phospho-glyceroyl phosphate + ADP. The protein operates within carbohydrate degradation; glycolysis; pyruvate from D-glyceraldehyde 3-phosphate: step 2/5. In Coxiella burnetii (strain RSA 493 / Nine Mile phase I), this protein is Phosphoglycerate kinase.